The primary structure comprises 336 residues: Ornithine carbamoyltransferase (336 aa).

Residues 56-59 (STRT), glutamine 83, arginine 107, and 134-137 (HPTQ) each bind carbamoyl phosphate. Residues asparagine 168, aspartate 232, and 236–237 (SM) each bind L-ornithine. Carbamoyl phosphate is bound by residues 274–275 (CL) and arginine 320.

It belongs to the aspartate/ornithine carbamoyltransferase superfamily. OTCase family.

It localises to the cytoplasm. It carries out the reaction carbamoyl phosphate + L-ornithine = L-citrulline + phosphate + H(+). Its pathway is amino-acid biosynthesis; L-arginine biosynthesis; L-arginine from L-ornithine and carbamoyl phosphate: step 1/3. Its function is as follows. Reversibly catalyzes the transfer of the carbamoyl group from carbamoyl phosphate (CP) to the N(epsilon) atom of ornithine (ORN) to produce L-citrulline. This is Ornithine carbamoyltransferase from Erwinia tasmaniensis (strain DSM 17950 / CFBP 7177 / CIP 109463 / NCPPB 4357 / Et1/99).